We begin with the raw amino-acid sequence, 622 residues long: Threonine--tRNA ligase (622 aa).

Positions Met1 to Thr136 are editing domain. The catalytic stretch occupies residues Pro199–Pro498. The Zn(2+) site is built by Cys291, His343, and His467.

It belongs to the class-II aminoacyl-tRNA synthetase family. In terms of assembly, homodimer. It depends on Zn(2+) as a cofactor.

The protein localises to the cytoplasm. It catalyses the reaction tRNA(Thr) + L-threonine + ATP = L-threonyl-tRNA(Thr) + AMP + diphosphate + H(+). Catalyzes the attachment of threonine to tRNA(Thr) in a two-step reaction: L-threonine is first activated by ATP to form Thr-AMP and then transferred to the acceptor end of tRNA(Thr). Also edits incorrectly charged L-seryl-tRNA(Thr). The polypeptide is Threonine--tRNA ligase (Methanococcus maripaludis (strain DSM 14266 / JCM 13030 / NBRC 101832 / S2 / LL)).